We begin with the raw amino-acid sequence, 181 residues long: Ferritin BfrB (181 aa).

A Ferritin-like diiron domain is found at 5 to 150 (GALDTKFHAL…TLVRIADRAG (146 aa)). Lys10 participates in a covalent cross-link: Isoglutamyl lysine isopeptide (Lys-Gln) (interchain with Q-Cter in protein Pup). 5 residues coordinate Fe cation: Glu22, Glu55, His58, Glu99, and Gln132.

This sequence belongs to the ferritin family. Prokaryotic subfamily. In terms of assembly, homooligomer of 24 subunits that are packed together to form an approximately spherical molecule with a central cavity, in which large amounts of iron can be stored.

The catalysed reaction is 4 Fe(2+) + O2 + 4 H(+) = 4 Fe(3+) + 2 H2O. In terms of biological role, iron-storage protein that displays ferroxidase activity, catalyzing the oxidation of Fe(2+) ions into Fe(3+) ions, that can then be deposited as a ferric-oxide mineral core within the central cavity of the protein complex. The protein is Ferritin BfrB (bfrB) of Mycolicibacterium smegmatis (strain ATCC 700084 / mc(2)155) (Mycobacterium smegmatis).